Here is a 164-residue protein sequence, read N- to C-terminus: Protein-export protein SecB (164 aa).

Belongs to the SecB family. Homotetramer, a dimer of dimers. One homotetramer interacts with 1 SecA dimer.

The protein localises to the cytoplasm. In terms of biological role, one of the proteins required for the normal export of preproteins out of the cell cytoplasm. It is a molecular chaperone that binds to a subset of precursor proteins, maintaining them in a translocation-competent state. It also specifically binds to its receptor SecA. In Chromohalobacter salexigens (strain ATCC BAA-138 / DSM 3043 / CIP 106854 / NCIMB 13768 / 1H11), this protein is Protein-export protein SecB.